A 272-amino-acid chain; its full sequence is Nitrogenase iron protein (272 aa).

8–15 is an ATP binding site; it reads GKGGIGKS. C94 is a binding site for [4Fe-4S] cluster. At R97 the chain carries ADP-ribosylarginine; by dinitrogenase reductase ADP-ribosyltransferase. C129 is a [4Fe-4S] cluster binding site.

Belongs to the NifH/BchL/ChlL family. Homodimer. The cofactor is [4Fe-4S] cluster. Post-translationally, the reversible ADP-ribosylation of Arg-97 inactivates the nitrogenase reductase and regulates nitrogenase activity.

It catalyses the reaction N2 + 8 reduced [2Fe-2S]-[ferredoxin] + 16 ATP + 16 H2O = H2 + 8 oxidized [2Fe-2S]-[ferredoxin] + 2 NH4(+) + 16 ADP + 16 phosphate + 6 H(+). The key enzymatic reactions in nitrogen fixation are catalyzed by the nitrogenase complex, which has 2 components: the iron protein and the molybdenum-iron protein. The chain is Nitrogenase iron protein from Desulforamulus reducens (strain ATCC BAA-1160 / DSM 100696 / MI-1) (Desulfotomaculum reducens).